The sequence spans 262 residues: Phosphatidylserine decarboxylase proenzyme (262 aa).

Active-site charge relay system; for autoendoproteolytic cleavage activity residues include Asp86, His142, and Ser226. The active-site Schiff-base intermediate with substrate; via pyruvic acid; for decarboxylase activity is the Ser226. Ser226 carries the pyruvic acid (Ser); by autocatalysis modification.

This sequence belongs to the phosphatidylserine decarboxylase family. PSD-B subfamily. Prokaryotic type I sub-subfamily. Heterodimer of a large membrane-associated beta subunit and a small pyruvoyl-containing alpha subunit. The cofactor is pyruvate. Post-translationally, is synthesized initially as an inactive proenzyme. Formation of the active enzyme involves a self-maturation process in which the active site pyruvoyl group is generated from an internal serine residue via an autocatalytic post-translational modification. Two non-identical subunits are generated from the proenzyme in this reaction, and the pyruvate is formed at the N-terminus of the alpha chain, which is derived from the carboxyl end of the proenzyme. The autoendoproteolytic cleavage occurs by a canonical serine protease mechanism, in which the side chain hydroxyl group of the serine supplies its oxygen atom to form the C-terminus of the beta chain, while the remainder of the serine residue undergoes an oxidative deamination to produce ammonia and the pyruvoyl prosthetic group on the alpha chain. During this reaction, the Ser that is part of the protease active site of the proenzyme becomes the pyruvoyl prosthetic group, which constitutes an essential element of the active site of the mature decarboxylase.

The protein resides in the cell membrane. The catalysed reaction is a 1,2-diacyl-sn-glycero-3-phospho-L-serine + H(+) = a 1,2-diacyl-sn-glycero-3-phosphoethanolamine + CO2. It participates in phospholipid metabolism; phosphatidylethanolamine biosynthesis; phosphatidylethanolamine from CDP-diacylglycerol: step 2/2. Its function is as follows. Catalyzes the formation of phosphatidylethanolamine (PtdEtn) from phosphatidylserine (PtdSer). The polypeptide is Phosphatidylserine decarboxylase proenzyme (Bacillus cereus (strain B4264)).